A 149-amino-acid polypeptide reads, in one-letter code: Probable ubiquitin-conjugating enzyme E2 12 (149 aa).

Over residues 1–15 (MASKRISRELRDMQR) the composition is skewed to basic and acidic residues. Residues 1 to 22 (MASKRISRELRDMQRHPPANCS) are disordered. The UBC core domain maps to 1 to 148 (MASKRISREL…AQKWTQKYAM (148 aa)). The active-site Glycyl thioester intermediate is the C86.

This sequence belongs to the ubiquitin-conjugating enzyme family. As to expression, ubiquitously expressed at very low levels.

The enzyme catalyses S-ubiquitinyl-[E1 ubiquitin-activating enzyme]-L-cysteine + [E2 ubiquitin-conjugating enzyme]-L-cysteine = [E1 ubiquitin-activating enzyme]-L-cysteine + S-ubiquitinyl-[E2 ubiquitin-conjugating enzyme]-L-cysteine.. The protein operates within protein modification; protein ubiquitination. Functionally, accepts the ubiquitin from the E1 complex and catalyzes its covalent attachment to other proteins. This is Probable ubiquitin-conjugating enzyme E2 12 (UBC12) from Arabidopsis thaliana (Mouse-ear cress).